We begin with the raw amino-acid sequence, 331 residues long: MDRAAVAKMGAVASASVCALVGGVVLAQYIFTMKKKTGRKTKIIEMMPEFQKKTVHIKDPGRVEEIICGLIKGGAAKLQIITDFDMTLSRFSYNGKRCPTCHNIIDNSKLITEECRKKLLQLKETYYAIEIDPALTIEEKYPYMVEWYNKSHALLIEQGLQKDKLAEVVRESDVMLKEGYENFFDKLSEHNIPVFIFSAGIGDILEEVIHQAGVYHSNVKVVSNFMDFDENGILKGFKGELIHVYNKHDGALKNTEYFKQLKDNSNIILLGDSQGDLSMADGVANVEHILKIGYLNDKVDELLEKYMDSYDIVLVKDESLEVANSILQKIL.

Asp83 (nucleophile) is an active-site residue. Mg(2+) contacts are provided by Asp83 and Asp85. Catalysis depends on Asp85, which acts as the Proton donor. Glu130 provides a ligand contact to CMP. N(7)-methyl-GMP-binding residues include Glu130 and Ser151. Residues 198–199 (SA) and Lys247 contribute to the substrate site. A Mg(2+)-binding site is contributed by Asp272.

It belongs to the pyrimidine 5'-nucleotidase family.

The protein resides in the cytoplasm. The enzyme catalyses N(7)-methyl-GMP + H2O = N(7)-methylguanosine + phosphate. It catalyses the reaction a ribonucleoside 5'-phosphate + H2O = a ribonucleoside + phosphate. Its function is as follows. Nucleotidase which shows specific activity towards cytidine monophosphate (CMP) and 7-methylguanosine monophosphate (m(7)GMP). CMP seems to be the preferred substrate. The polypeptide is Cytosolic 5'-nucleotidase 3A (NT5C3A) (Gallus gallus (Chicken)).